The chain runs to 246 residues: Probable transcriptional regulatory protein SPO1072 (246 aa).

Positions 1–22 (MAGHSKWANIQHRKGRQDAARS) are disordered.

This sequence belongs to the TACO1 family.

It localises to the cytoplasm. This is Probable transcriptional regulatory protein SPO1072 from Ruegeria pomeroyi (strain ATCC 700808 / DSM 15171 / DSS-3) (Silicibacter pomeroyi).